The sequence spans 639 residues: Cystathionine gamma-synthase (639 aa).

An N6-(pyridoxal phosphate)lysine modification is found at Lys443.

This sequence belongs to the trans-sulfuration enzymes family. MET7 subfamily. It depends on pyridoxal 5'-phosphate as a cofactor.

Its subcellular location is the cytoplasm. It is found in the nucleus. The catalysed reaction is O-succinyl-L-homoserine + L-cysteine = L,L-cystathionine + succinate + H(+). Its pathway is amino-acid biosynthesis; L-methionine biosynthesis via de novo pathway; L-cystathionine from O-succinyl-L-homoserine: step 1/1. Functionally, catalyzes the formation of L-cystathionine from O-succinyl-L-homoserine (OSHS) and L-cysteine, via a gamma-replacement reaction. In the absence of thiol, catalyzes gamma-elimination to form 2-oxobutanoate, succinate and ammonia. The sequence is that of Cystathionine gamma-synthase from Saccharomyces cerevisiae (strain ATCC 204508 / S288c) (Baker's yeast).